Reading from the N-terminus, the 312-residue chain is Probable splicing factor, arginine/serine-rich 1 (312 aa).

One can recognise an RRM 1 domain in the interval 3–73 (ARIYIGRLTS…ERVILDYSKP (71 aa)). Disordered stretches follow at residues 69–125 (DYSK…GRPY) and 196–312 (KMID…DGDN). The span at 74-90 (RGGGGDRGGFGGGGRGG) shows a compositional bias: gly residues. Basic and acidic residues predominate over residues 103–121 (GRDRFDRYDRGPPRRESRY). The RRM 2 domain occupies 129–202 (HRVVVENLSS…RKIKMIDDSQ (74 aa)). Positions 206 to 259 (SRSRSNSRSRSRSRSRDRRRSRSRSSSRSKSRSRSPPKRSRRESKSKSRSRSRS) are enriched in basic residues.

This sequence belongs to the splicing factor SR family. Extensively phosphorylated on serine residues in the RS domain.

It localises to the nucleus. Functionally, plays a functionally redundant role in spermatogenesis and growth rate control. In Caenorhabditis elegans, this protein is Probable splicing factor, arginine/serine-rich 1 (rsp-1).